Consider the following 58-residue polypeptide: Large ribosomal subunit protein uL30 (58 aa).

Belongs to the universal ribosomal protein uL30 family. Part of the 50S ribosomal subunit.

The polypeptide is Large ribosomal subunit protein uL30 (Pseudomonas savastanoi pv. phaseolicola (strain 1448A / Race 6) (Pseudomonas syringae pv. phaseolicola (strain 1448A / Race 6))).